A 423-amino-acid polypeptide reads, in one-letter code: Tubulin beta-2 chain (423 aa).

GTP-binding residues include Glu-44, Ser-113, Gly-117, Thr-118, Gly-119, Asn-179, and Asn-201. Mg(2+) is bound at residue Glu-44. A disordered region spans residues 394 to 423 (VSEYQQYQDATAEEEGEYDEDEDDEGGDYA). The span at 404–423 (TAEEEGEYDEDEDDEGGDYA) shows a compositional bias: acidic residues.

This sequence belongs to the tubulin family. Dimer of alpha and beta chains. A typical microtubule is a hollow water-filled tube with an outer diameter of 25 nm and an inner diameter of 15 nM. Alpha-beta heterodimers associate head-to-tail to form protofilaments running lengthwise along the microtubule wall with the beta-tubulin subunit facing the microtubule plus end conferring a structural polarity. Microtubules usually have 13 protofilaments but different protofilament numbers can be found in some organisms and specialized cells. The cofactor is Mg(2+).

The protein resides in the cytoplasm. It is found in the cytoskeleton. Tubulin is the major constituent of microtubules, a cylinder consisting of laterally associated linear protofilaments composed of alpha- and beta-tubulin heterodimers. Microtubules grow by the addition of GTP-tubulin dimers to the microtubule end, where a stabilizing cap forms. Below the cap, tubulin dimers are in GDP-bound state, owing to GTPase activity of alpha-tubulin. The chain is Tubulin beta-2 chain (TUBB2) from Oomycete-like sp. (strain MacKay2000).